A 347-amino-acid polypeptide reads, in one-letter code: Protein RecA (347 aa).

80 to 87 (GPESSGKT) serves as a coordination point for ATP.

Belongs to the RecA family.

It localises to the cytoplasm. Can catalyze the hydrolysis of ATP in the presence of single-stranded DNA, the ATP-dependent uptake of single-stranded DNA by duplex DNA, and the ATP-dependent hybridization of homologous single-stranded DNAs. It interacts with LexA causing its activation and leading to its autocatalytic cleavage. This chain is Protein RecA, found in Chlorobaculum parvum (strain DSM 263 / NCIMB 8327) (Chlorobium vibrioforme subsp. thiosulfatophilum).